Reading from the N-terminus, the 304-residue chain is Ribosomal RNA small subunit methyltransferase H (304 aa).

Residues 37-39 (AGH), D57, F79, D100, and H107 contribute to the S-adenosyl-L-methionine site.

The protein belongs to the methyltransferase superfamily. RsmH family.

The protein localises to the cytoplasm. It catalyses the reaction cytidine(1402) in 16S rRNA + S-adenosyl-L-methionine = N(4)-methylcytidine(1402) in 16S rRNA + S-adenosyl-L-homocysteine + H(+). Its function is as follows. Specifically methylates the N4 position of cytidine in position 1402 (C1402) of 16S rRNA. The sequence is that of Ribosomal RNA small subunit methyltransferase H from Bacteroides thetaiotaomicron (strain ATCC 29148 / DSM 2079 / JCM 5827 / CCUG 10774 / NCTC 10582 / VPI-5482 / E50).